The chain runs to 277 residues: MEMO1 family protein CTN_0605 (277 aa).

This sequence belongs to the MEMO1 family.

The chain is MEMO1 family protein CTN_0605 from Thermotoga neapolitana (strain ATCC 49049 / DSM 4359 / NBRC 107923 / NS-E).